The chain runs to 222 residues: Probable fimbrial chaperone EcpB (222 aa).

Residues 1–20 (MKKHLLPLALLFSGISPAQA) form the signal peptide.

The protein belongs to the EcpB/EcpE family.

Functionally, part of the ecpRABCDE operon, which encodes the E.coli common pilus (ECP). ECP is found in both commensal and pathogenic strains and plays a dual role in early-stage biofilm development and host cell recognition. This Escherichia coli O18:K1:H7 (strain IHE3034 / ExPEC) protein is Probable fimbrial chaperone EcpB (ecpB).